Here is a 181-residue protein sequence, read N- to C-terminus: Oligoribonuclease (181 aa).

The Exonuclease domain maps to Leu8–Leu171. Tyr129 is an active-site residue.

The protein belongs to the oligoribonuclease family.

It is found in the cytoplasm. Its function is as follows. 3'-to-5' exoribonuclease specific for small oligoribonucleotides. The sequence is that of Oligoribonuclease from Shewanella oneidensis (strain ATCC 700550 / JCM 31522 / CIP 106686 / LMG 19005 / NCIMB 14063 / MR-1).